The sequence spans 146 residues: Hemoglobin subunit beta-1 (146 aa).

Residues 2–146 (GLTAHDRQLI…IADALGKGYH (145 aa)) enclose the Globin domain. The heme b site is built by H63 and H92.

It belongs to the globin family. In terms of assembly, heterotetramer of two alpha chains and two beta chains. In terms of tissue distribution, red blood cells.

Its function is as follows. Involved in oxygen transport from the lung to the various peripheral tissues. In Xenopus borealis (Kenyan clawed frog), this protein is Hemoglobin subunit beta-1 (hbb1).